We begin with the raw amino-acid sequence, 429 residues long: tRNA-2-methylthio-N(6)-dimethylallyladenosine synthase (429 aa).

The 110-residue stretch at Met-1–Lys-110 folds into the MTTase N-terminal domain. [4Fe-4S] cluster-binding residues include Cys-10, Cys-46, Cys-75, Cys-146, Cys-150, and Cys-153. The Radical SAM core domain maps to Arg-132 to Leu-364. Residues Glu-366–Lys-427 form the TRAM domain.

This sequence belongs to the methylthiotransferase family. MiaB subfamily. As to quaternary structure, monomer. [4Fe-4S] cluster serves as cofactor.

It is found in the cytoplasm. The enzyme catalyses N(6)-dimethylallyladenosine(37) in tRNA + (sulfur carrier)-SH + AH2 + 2 S-adenosyl-L-methionine = 2-methylsulfanyl-N(6)-dimethylallyladenosine(37) in tRNA + (sulfur carrier)-H + 5'-deoxyadenosine + L-methionine + A + S-adenosyl-L-homocysteine + 2 H(+). Its function is as follows. Catalyzes the methylthiolation of N6-(dimethylallyl)adenosine (i(6)A), leading to the formation of 2-methylthio-N6-(dimethylallyl)adenosine (ms(2)i(6)A) at position 37 in tRNAs that read codons beginning with uridine. The protein is tRNA-2-methylthio-N(6)-dimethylallyladenosine synthase of Thermosipho africanus (strain TCF52B).